The primary structure comprises 363 residues: Zinc phosphodiesterase ELAC protein 1 (363 aa).

7 residues coordinate Zn(2+): H62, H64, D66, H67, H182, D253, and H313. Residue D66 is the Proton acceptor of the active site.

This sequence belongs to the RNase Z family. In terms of assembly, homodimer. It depends on Zn(2+) as a cofactor.

It localises to the cytoplasm. It is found in the cytosol. Its subcellular location is the nucleus. It carries out the reaction Endonucleolytic cleavage of RNA, removing extra 3' nucleotides from tRNA precursor, generating 3' termini of tRNAs. A 3'-hydroxy group is left at the tRNA terminus and a 5'-phosphoryl group is left at the trailer molecule.. In terms of biological role, zinc phosphodiesterase, which displays some tRNA 3'-processing endonuclease activity. Specifically involved in tRNA repair: acts downstream of the ribosome-associated quality control (RQC) pathway by removing a 2',3'-cyclic phosphate from tRNAs following cleavage by ANKZF1. tRNAs are then processed by TRNT1. This chain is Zinc phosphodiesterase ELAC protein 1 (ELAC1), found in Bos taurus (Bovine).